Here is a 117-residue protein sequence, read N- to C-terminus: MVQRLTYRRRLSYNTASNKTRLSRTPGNRIVYLYTKKTGKSPKSACGICPGRLRGIRAVRPQVLMRLSKTKKHVSRAYGGSMCAKCVRDRIKRAFLIEEQKIVVKVLKAQAQTQKSK.

This sequence belongs to the eukaryotic ribosomal protein eL34 family. Component of the large ribosomal subunit.

The protein localises to the cytoplasm. Its subcellular location is the cytosol. It is found in the endoplasmic reticulum. Functionally, component of the large ribosomal subunit. The ribosome is a large ribonucleoprotein complex responsible for the synthesis of proteins in the cell. The chain is Large ribosomal subunit protein eL34 (rpl34) from Danio rerio (Zebrafish).